A 134-amino-acid polypeptide reads, in one-letter code: uncharacterized protein (134 aa).

Residues 59–92 (VSKPKRRSPHPHGNKAADKRKTTEKEPERKKRVG) form a disordered region. The span at 61–71 (KPKRRSPHPHG) shows a compositional bias: basic residues. The segment covering 73–87 (KAADKRKTTEKEPER) has biased composition (basic and acidic residues).

This is an uncharacterized protein from Saccharomyces cerevisiae (strain ATCC 204508 / S288c) (Baker's yeast).